The following is a 569-amino-acid chain: Cell death protein 4 (569 aa).

A CARD domain is found at 1–91 (MLCEIECRAL…HLKDFLDEYL (91 aa)). Positions 116 to 442 (DRKLLLGNVP…IWSCVIPVDI (327 aa)) constitute an NB-ARC domain. ATP contacts are provided by residues phenylalanine 131, 162–167 (GSGKSV), and glutamine 171. Residue serine 166 coordinates Mg(2+).

In terms of assembly, associates as an asymmetric homodimer with ced-9. Upon release from ced-9, forms an octamer, known as the apoptosome, and interacts with ced-3; the interaction results in ced-3 autoproteolytic cleavage and activation. The octamer (a tetramer of an asymmetric dimer) also interacts with two processed ced-3 to form a stable holoenzyme. Interacts with sex-determining protein fem-1. May form a complex composed of ced-3, ced-4 and mac-1 or of ced-9, ced-4 and mac-1. Within the complex, interacts with ced-4.

It is found in the mitochondrion. The protein resides in the cytoplasm. It localises to the perinuclear region. Functionally, plays a major role in programmed cell death (PCD, apoptosis). egl-1 binds to and directly inhibits the activity of ced-9, releasing the cell death activator ced-4 from a ced-9/ced-4 containing protein complex and allowing ced-4 to induce caspase ced-3 autoproteolytic cleavage and activation. Also forms a holoenzyme with processed ced-3 enhancing ced-3 activity. Component of the egl-1, ced-9, ced-4 and ced-3 apoptotic signaling cascade required for the initiation of programmed cell death in cells fated to die during embryonic and postembryonic development. During oogenesis, required for germline apoptosis downstream of ced-9 and upstream of ced-3 but independently of egl-1. May regulate germline apoptosis in response to DNA damage, probably downstream of let-60/ras and mpk-1 pathway. Regulates CEP neuron apoptosis in response to high Al(3+) levels. During male tail morphogenesis, promotes apoptosis of the tail-spike cell. During larval development, required for the elimination of transient presynaptic components downstream of egl-1 and ced-9 and upstream of ced-3 apoptotic pathway. Together with ain-1, a component of the miRNA-induced-silencing complex (miRISC), and probably upstream of ced-3, regulates temporal cell fate patterning during larval development. May play a role in resistance to S.typhimurium-mediated infection. The chain is Cell death protein 4 from Caenorhabditis briggsae.